The sequence spans 135 residues: MGAIVLVAIMALVASSSAFSDDEQNMMNAEGEKGIRSYSAADDVSDMIESLFVNSGNRNLVLMMLSGRPQPNARCVEDGQPCGFLVSDKGCCLPNYCSQYARGKCICVPKGQPCGLLHFCCLGLTCDGSFQGTCN.

The first 18 residues, 1 to 18, serve as a signal peptide directing secretion; sequence MGAIVLVAIMALVASSSA. Positions 19–72 are excised as a propeptide; sequence FSDDEQNMMNAEGEKGIRSYSAADDVSDMIESLFVNSGNRNLVLMMLSGRPQPN. Cystine bridges form between Cys75/Cys92, Cys82/Cys97, Cys91/Cys105, Cys107/Cys121, Cys114/Cys126, and Cys120/Cys134.

Belongs to the urticatoxin-2 family. As to expression, expressed in trichomes, that are stiff epidermal hairs located on the surface of petioles and leaves.

The protein localises to the secreted. Plant defense neurotoxin that causes pain and systemic symptoms in mammals via modulation of voltage-gated sodium channels (Nav). Potent modulator of human Nav1.5/SCN5A (EC(50)=55 nM), Nav1.6/SCN8A (EC(50)=0.86 nM), and Nav1.7/SCN9A (EC(50)=208 nM), where it shifts the activation threshold to more negative potentials and delays fast inactivation. Also shifts the voltage-dependence of steady-state fast inactivation of Nav1.6/SCN8A, but not that of Nav1.5/SCN5A or Nav1.7/SCN9A. On Nav1.7/SCN9A, principally acts by binding to extracellular loops of domain IV (Nav site 3). In vivo, intraplantar injection into mice causes numerous dose-dependent, immediate, and long-lasting spontaneous pain behaviors, while no swelling is observed in the injected paw. At the highest doses tested, systemic symptoms including hypokinesia and hypersalivation are observed. The polypeptide is Beta/delta-urticatoxin-Ui2a (Urtica incisa (Scrub nettle)).